The chain runs to 318 residues: Transaldolase (318 aa).

The active-site Schiff-base intermediate with substrate is the lysine 132.

It belongs to the transaldolase family. Type 1 subfamily. As to quaternary structure, homodimer.

The protein resides in the cytoplasm. The catalysed reaction is D-sedoheptulose 7-phosphate + D-glyceraldehyde 3-phosphate = D-erythrose 4-phosphate + beta-D-fructose 6-phosphate. Its pathway is carbohydrate degradation; pentose phosphate pathway; D-glyceraldehyde 3-phosphate and beta-D-fructose 6-phosphate from D-ribose 5-phosphate and D-xylulose 5-phosphate (non-oxidative stage): step 2/3. Transaldolase is important for the balance of metabolites in the pentose-phosphate pathway. The sequence is that of Transaldolase from Shewanella baltica (strain OS155 / ATCC BAA-1091).